A 631-amino-acid polypeptide reads, in one-letter code: Coiled-coil domain-containing protein 93 (631 aa).

Disordered stretches follow at residues 1 to 23 (MGLPRGPEGQGLPEVETREDEEQ) and 214 to 243 (QSKMEKAEDKKTALPAGLSATEKADAHEED). Residues 1–430 (MGLPRGPEGQ…LKAERAPRGD (430 aa)) form a sufficient for interaction with CCDC22 region. Residues 215–225 (SKMEKAEDKKT) are compositionally biased toward basic and acidic residues. 3 positions are modified to phosphoserine: serine 298, serine 301, and serine 305. Residues 309–631 (LGTSQLHRRK…LLSKVKAKAS (323 aa)) are a coiled coil. A compositionally biased stretch (basic and acidic residues) spans 421–433 (LKAERAPRGDEKT). The segment at 421-447 (LKAERAPRGDEKTLSSGEPPGTLTSAM) is disordered. The sufficient for interaction with WASHC2C stretch occupies residues 448-631 (THDEDLDRRY…LLSKVKAKAS (184 aa)).

It belongs to the CCDC93 family. In terms of assembly, component of the commander complex consisting of the CCC subcomplex and the retriever subcomplex. Component of the CCC (COMMD/CCDC22/CCDC93) subcomplex consisting of COMMD1, COMMD2, COMMD3, COMMD4, COMMD5, COMMD6, COMMD7, COMMD8, COMMD9, COMMD10, CCDC22 and CCDC93. Forms a coiled-coil heterodimer with CCDC22; this heterodimer interacts with the guanine nucleotide exchange factor DENND10; the interaction is direct. Interacts with WASHC1. Interacts directly with WASHC2C. Interacts with SNX17 and SNX31.

The protein localises to the early endosome. Component of the commander complex that is essential for endosomal recycling of transmembrane cargos; the commander complex is composed of composed of the CCC subcomplex and the retriever subcomplex. Component of the CCC complex, which is involved in the regulation of endosomal recycling of surface proteins, including integrins, signaling receptor and channels. The CCC complex associates with SNX17, retriever and WASH complexes to prevent lysosomal degradation and promote cell surface recycling of numerous cargos such as integrins ITGA5:ITGB1. Involved in copper-dependent ATP7A trafficking between the trans-Golgi network and vesicles in the cell periphery; the function is proposed to depend on its association within the CCC complex and cooperation with the WASH complex on early endosomes and is dependent on its interaction with WASHC2C. Functionally, (Microbial infection) The CCC complex, in collaboration with the heterotrimeric retriever complex, mediates the exit of human papillomavirus to the cell surface. This Homo sapiens (Human) protein is Coiled-coil domain-containing protein 93 (CCDC93).